A 125-amino-acid polypeptide reads, in one-letter code: Small ribosomal subunit protein uS12 (125 aa).

Residues 1–28 (MPTISQLIGSERKRLTRKTKSPALKSCP) form a disordered region. At Asp-89 the chain carries 3-methylthioaspartic acid. The disordered stretch occupies residues 104-125 (TAGVKDRRQSRSKYGAKAPKNN).

The protein belongs to the universal ribosomal protein uS12 family. As to quaternary structure, part of the 30S ribosomal subunit. Contacts proteins S8 and S17. May interact with IF1 in the 30S initiation complex.

Functionally, with S4 and S5 plays an important role in translational accuracy. Its function is as follows. Interacts with and stabilizes bases of the 16S rRNA that are involved in tRNA selection in the A site and with the mRNA backbone. Located at the interface of the 30S and 50S subunits, it traverses the body of the 30S subunit contacting proteins on the other side and probably holding the rRNA structure together. The combined cluster of proteins S8, S12 and S17 appears to hold together the shoulder and platform of the 30S subunit. The polypeptide is Small ribosomal subunit protein uS12 (Prochlorococcus marinus (strain MIT 9515)).